The sequence spans 398 residues: Argininosuccinate synthase (398 aa).

9-17 (AYSGGLDTS) lines the ATP pocket. Tyrosine 85 contributes to the L-citrulline binding site. Residue glycine 115 participates in ATP binding. Residues threonine 117, asparagine 121, and aspartate 122 each coordinate L-aspartate. Asparagine 121 contributes to the L-citrulline binding site. Positions 125, 173, 258, and 270 each coordinate L-citrulline.

The protein belongs to the argininosuccinate synthase family. Type 1 subfamily. Homotetramer.

The protein resides in the cytoplasm. The catalysed reaction is L-citrulline + L-aspartate + ATP = 2-(N(omega)-L-arginino)succinate + AMP + diphosphate + H(+). It participates in amino-acid biosynthesis; L-arginine biosynthesis; L-arginine from L-ornithine and carbamoyl phosphate: step 2/3. The chain is Argininosuccinate synthase from Streptococcus pneumoniae (strain Hungary19A-6).